The primary structure comprises 292 residues: NAD kinase (292 aa).

The active-site Proton acceptor is the Asp73. Residues 73–74 (DG), 147–148 (NE), His158, Arg175, Asp177, 188–193 (TAYSLS), and Gln247 contribute to the NAD(+) site.

This sequence belongs to the NAD kinase family. It depends on a divalent metal cation as a cofactor.

The protein resides in the cytoplasm. It carries out the reaction NAD(+) + ATP = ADP + NADP(+) + H(+). Functionally, involved in the regulation of the intracellular balance of NAD and NADP, and is a key enzyme in the biosynthesis of NADP. Catalyzes specifically the phosphorylation on 2'-hydroxyl of the adenosine moiety of NAD to yield NADP. The protein is NAD kinase of Pectobacterium atrosepticum (strain SCRI 1043 / ATCC BAA-672) (Erwinia carotovora subsp. atroseptica).